Consider the following 90-residue polypeptide: MDPLRAQQLAAELEVEMMADMYNRMTSACHRKCVPPHYKEAELSKGESVCLDRCVSKYLDIHERMGKKLTELSMQDEELMKRVQQSSGPA.

The Twin CX3C motif motif lies at 29–54 (CHRKCVPPHYKEAELSKGESVCLDRC). 2 cysteine pairs are disulfide-bonded: Cys29–Cys54 and Cys33–Cys50.

This sequence belongs to the small Tim family. In terms of assembly, heterohexamer; composed of 3 copies of TIMM9 and 3 copies of TIMM10/TIM10A, named soluble 70 kDa complex. The complex forms a 6-bladed alpha-propeller structure and associates with the TIMM22 component of the TIM22 complex. Interacts with multi-pass transmembrane proteins in transit. Also forms a complex composed of TIMM9, TIMM10/TIM10A and FXC1/TIM10B.

It is found in the mitochondrion inner membrane. In terms of biological role, mitochondrial intermembrane chaperone that participates in the import and insertion of multi-pass transmembrane proteins into the mitochondrial inner membrane. May also be required for the transfer of beta-barrel precursors from the TOM complex to the sorting and assembly machinery (SAM complex) of the outer membrane. Acts as a chaperone-like protein that protects the hydrophobic precursors from aggregation and guide them through the mitochondrial intermembrane space. The polypeptide is Mitochondrial import inner membrane translocase subunit Tim10 (Timm10) (Rattus norvegicus (Rat)).